The following is a 185-amino-acid chain: Crossover junction endodeoxyribonuclease RuvC (185 aa).

Catalysis depends on residues Asp16, Glu75, and Asp147. Residues Asp16, Glu75, and Asp147 each coordinate Mg(2+).

The protein belongs to the RuvC family. In terms of assembly, homodimer which binds Holliday junction (HJ) DNA. The HJ becomes 2-fold symmetrical on binding to RuvC with unstacked arms; it has a different conformation from HJ DNA in complex with RuvA. In the full resolvosome a probable DNA-RuvA(4)-RuvB(12)-RuvC(2) complex forms which resolves the HJ. Requires Mg(2+) as cofactor.

It localises to the cytoplasm. It carries out the reaction Endonucleolytic cleavage at a junction such as a reciprocal single-stranded crossover between two homologous DNA duplexes (Holliday junction).. The RuvA-RuvB-RuvC complex processes Holliday junction (HJ) DNA during genetic recombination and DNA repair. Endonuclease that resolves HJ intermediates. Cleaves cruciform DNA by making single-stranded nicks across the HJ at symmetrical positions within the homologous arms, yielding a 5'-phosphate and a 3'-hydroxyl group; requires a central core of homology in the junction. The consensus cleavage sequence is 5'-(A/T)TT(C/G)-3'. Cleavage occurs on the 3'-side of the TT dinucleotide at the point of strand exchange. HJ branch migration catalyzed by RuvA-RuvB allows RuvC to scan DNA until it finds its consensus sequence, where it cleaves and resolves the cruciform DNA. This chain is Crossover junction endodeoxyribonuclease RuvC, found in Aromatoleum aromaticum (strain DSM 19018 / LMG 30748 / EbN1) (Azoarcus sp. (strain EbN1)).